Here is a 147-residue protein sequence, read N- to C-terminus: Myoglobin (147 aa).

Residues 2–141 (ADFDAVLKFW…FIADMDANYK (140 aa)) form the Globin domain. His60 provides a ligand contact to nitrite. O2 is bound at residue His60. His89 is a heme b binding site.

It belongs to the globin family. Monomeric.

It localises to the cytoplasm. The protein resides in the sarcoplasm. It carries out the reaction Fe(III)-heme b-[protein] + nitric oxide + H2O = Fe(II)-heme b-[protein] + nitrite + 2 H(+). It catalyses the reaction H2O2 + AH2 = A + 2 H2O. In terms of biological role, monomeric heme protein which primary function is to store oxygen and facilitate its diffusion within muscle tissues. Reversibly binds oxygen through a pentacoordinated heme iron and enables its timely and efficient release as needed during periods of heightened demand. Depending on the oxidative conditions of tissues and cells, and in addition to its ability to bind oxygen, it also has a nitrite reductase activity whereby it regulates the production of bioactive nitric oxide. Under stress conditions, like hypoxia and anoxia, it also protects cells against reactive oxygen species thanks to its pseudoperoxidase activity. The polypeptide is Myoglobin (mb) (Scomber japonicus (Chub mackerel)).